The chain runs to 100 residues: Phosphoribosyl-ATP pyrophosphatase (100 aa).

This sequence belongs to the PRA-PH family.

The protein localises to the cytoplasm. It catalyses the reaction 1-(5-phospho-beta-D-ribosyl)-ATP + H2O = 1-(5-phospho-beta-D-ribosyl)-5'-AMP + diphosphate + H(+). Its pathway is amino-acid biosynthesis; L-histidine biosynthesis; L-histidine from 5-phospho-alpha-D-ribose 1-diphosphate: step 2/9. In Haloquadratum walsbyi (strain DSM 16790 / HBSQ001), this protein is Phosphoribosyl-ATP pyrophosphatase.